The primary structure comprises 182 residues: Bifunctional protein PyrR (182 aa).

The PRPP-binding signature appears at 100-112 (VVLVDDVLYTGRT).

This sequence belongs to the purine/pyrimidine phosphoribosyltransferase family. PyrR subfamily. As to quaternary structure, homodimer and homohexamer; in equilibrium.

The enzyme catalyses UMP + diphosphate = 5-phospho-alpha-D-ribose 1-diphosphate + uracil. Regulates transcriptional attenuation of the pyrimidine nucleotide (pyr) operon by binding in a uridine-dependent manner to specific sites on pyr mRNA. This disrupts an antiterminator hairpin in the RNA and favors formation of a downstream transcription terminator, leading to a reduced expression of downstream genes. Functionally, also displays a weak uracil phosphoribosyltransferase activity which is not physiologically significant. In Natranaerobius thermophilus (strain ATCC BAA-1301 / DSM 18059 / JW/NM-WN-LF), this protein is Bifunctional protein PyrR.